Consider the following 1647-residue polypeptide: Probable ubiquitin fusion degradation protein C12B10.01c (1647 aa).

Residues Thr192–Asn209 show a composition bias toward polar residues. 2 disordered regions span residues Thr192–Ala288 and Glu1039–Ser1076. 2 stretches are compositionally biased toward acidic residues: residues Asp218–Asn228 and Glu245–Asn273. The span at Glu1039–Gly1050 shows a compositional bias: low complexity. The segment covering Asp1051 to Thr1065 has biased composition (polar residues). Residues Glu1066 to Ser1076 are compositionally biased toward basic and acidic residues. The K-box stretch occupies residues Ile1183–Pro1257. The region spanning Ala1294–Ser1647 is the HECT domain. The Glycyl thioester intermediate role is filled by Cys1614.

The protein belongs to the UPL family. K-HECT subfamily.

The catalysed reaction is S-ubiquitinyl-[E2 ubiquitin-conjugating enzyme]-L-cysteine + [acceptor protein]-L-lysine = [E2 ubiquitin-conjugating enzyme]-L-cysteine + N(6)-ubiquitinyl-[acceptor protein]-L-lysine.. Functionally, E3 ubiquitin-protein ligase which accepts ubiquitin from an E2 ubiquitin-conjugating enzyme in the form of a thioester and then directly transfers the ubiquitin to targeted substrates. This Schizosaccharomyces pombe (strain 972 / ATCC 24843) (Fission yeast) protein is Probable ubiquitin fusion degradation protein C12B10.01c.